The primary structure comprises 267 residues: uncharacterized protein (267 aa).

Phosphoserine is present on residues Ser-210 and Ser-224.

As to expression, testis. Down-regulated in men with spermatocyte arrest.

In terms of biological role, essential for normal spermatogenesis and male fertility. This is an uncharacterized protein from Homo sapiens (Human).